Consider the following 246-residue polypeptide: uncharacterized protein (246 aa).

An N-terminal signal peptide occupies residues 1–24; it reads MGAPLRHCLLVAAALSLGCGVAAA. The next 2 helical transmembrane spans lie at 71 to 91 and 104 to 124; these read YYLG…IGLV and FTCA…AGGA.

It is found in the cell membrane. This is an uncharacterized protein from Mycobacterium tuberculosis (strain ATCC 25618 / H37Rv).